A 359-amino-acid polypeptide reads, in one-letter code: Probable dual-specificity RNA methyltransferase RlmN (359 aa).

Catalysis depends on E100, which acts as the Proton acceptor. The 235-residue stretch at T106 to D340 folds into the Radical SAM core domain. A disulfide bridge connects residues C113 and C345. The [4Fe-4S] cluster site is built by C120, C124, and C127. Residues G167–E168, S197, S226–H228, and N302 each bind S-adenosyl-L-methionine. C345 (S-methylcysteine intermediate) is an active-site residue.

This sequence belongs to the radical SAM superfamily. RlmN family. It depends on [4Fe-4S] cluster as a cofactor.

It localises to the cytoplasm. The catalysed reaction is adenosine(2503) in 23S rRNA + 2 reduced [2Fe-2S]-[ferredoxin] + 2 S-adenosyl-L-methionine = 2-methyladenosine(2503) in 23S rRNA + 5'-deoxyadenosine + L-methionine + 2 oxidized [2Fe-2S]-[ferredoxin] + S-adenosyl-L-homocysteine. It carries out the reaction adenosine(37) in tRNA + 2 reduced [2Fe-2S]-[ferredoxin] + 2 S-adenosyl-L-methionine = 2-methyladenosine(37) in tRNA + 5'-deoxyadenosine + L-methionine + 2 oxidized [2Fe-2S]-[ferredoxin] + S-adenosyl-L-homocysteine. In terms of biological role, specifically methylates position 2 of adenine 2503 in 23S rRNA and position 2 of adenine 37 in tRNAs. The chain is Probable dual-specificity RNA methyltransferase RlmN from Prochlorococcus marinus (strain NATL1A).